The sequence spans 188 residues: Elongation factor P (188 aa).

The protein belongs to the elongation factor P family.

It is found in the cytoplasm. The protein operates within protein biosynthesis; polypeptide chain elongation. Involved in peptide bond synthesis. Stimulates efficient translation and peptide-bond synthesis on native or reconstituted 70S ribosomes in vitro. Probably functions indirectly by altering the affinity of the ribosome for aminoacyl-tRNA, thus increasing their reactivity as acceptors for peptidyl transferase. In Aeromonas hydrophila subsp. hydrophila (strain ATCC 7966 / DSM 30187 / BCRC 13018 / CCUG 14551 / JCM 1027 / KCTC 2358 / NCIMB 9240 / NCTC 8049), this protein is Elongation factor P.